The primary structure comprises 75 residues: Small ribosomal subunit protein bS18 (75 aa).

This sequence belongs to the bacterial ribosomal protein bS18 family. In terms of assembly, part of the 30S ribosomal subunit. Forms a tight heterodimer with protein bS6.

Binds as a heterodimer with protein bS6 to the central domain of the 16S rRNA, where it helps stabilize the platform of the 30S subunit. The chain is Small ribosomal subunit protein bS18 from Pectobacterium atrosepticum (strain SCRI 1043 / ATCC BAA-672) (Erwinia carotovora subsp. atroseptica).